The sequence spans 556 residues: DNA ligase B (556 aa).

The N6-AMP-lysine intermediate role is filled by K122.

Belongs to the NAD-dependent DNA ligase family. LigB subfamily.

The enzyme catalyses NAD(+) + (deoxyribonucleotide)n-3'-hydroxyl + 5'-phospho-(deoxyribonucleotide)m = (deoxyribonucleotide)n+m + AMP + beta-nicotinamide D-nucleotide.. Catalyzes the formation of phosphodiester linkages between 5'-phosphoryl and 3'-hydroxyl groups in double-stranded DNA using NAD as a coenzyme and as the energy source for the reaction. This is DNA ligase B from Enterobacter sp. (strain 638).